A 416-amino-acid chain; its full sequence is Beta sliding clamp (416 aa).

It belongs to the beta sliding clamp family. In terms of assembly, forms a ring-shaped head-to-tail homodimer around DNA which binds and tethers DNA polymerases and other proteins to the DNA. The DNA replisome complex has a single clamp-loading complex (3 tau and 1 each of delta, delta', psi and chi subunits) which binds 3 Pol III cores (1 core on the leading strand and 2 on the lagging strand) each with a beta sliding clamp dimer. Additional proteins in the replisome are other copies of gamma, psi and chi, Ssb, DNA helicase and RNA primase.

It is found in the cytoplasm. Its function is as follows. Confers DNA tethering and processivity to DNA polymerases and other proteins. Acts as a clamp, forming a ring around DNA (a reaction catalyzed by the clamp-loading complex) which diffuses in an ATP-independent manner freely and bidirectionally along dsDNA. Initially characterized for its ability to contact the catalytic subunit of DNA polymerase III (Pol III), a complex, multichain enzyme responsible for most of the replicative synthesis in bacteria; Pol III exhibits 3'-5' exonuclease proofreading activity. The beta chain is required for initiation of replication as well as for processivity of DNA replication. The protein is Beta sliding clamp (dnaN) of Chlamydia trachomatis serovar D (strain ATCC VR-885 / DSM 19411 / UW-3/Cx).